A 280-amino-acid chain; its full sequence is Nucleotide-binding protein Swoo_4243 (280 aa).

An ATP-binding site is contributed by 8–15; sequence GRSGSGKS. Residue 56 to 59 coordinates GTP; the sequence is DVRN.

Belongs to the RapZ-like family.

Its function is as follows. Displays ATPase and GTPase activities. The polypeptide is Nucleotide-binding protein Swoo_4243 (Shewanella woodyi (strain ATCC 51908 / MS32)).